Here is a 676-residue protein sequence, read N- to C-terminus: Methionine--tRNA ligase (676 aa).

Positions 15–25 (PYANGSIHLGH) match the 'HIGH' region motif. Zn(2+) is bound by residues C146, C149, C159, and C162. A 'KMSKS' region motif is present at residues 332–336 (KMSKS). K335 is an ATP binding site. The tRNA-binding domain occupies 574–676 (DFAKVDMRIA…SGAQPGQQVK (103 aa)).

This sequence belongs to the class-I aminoacyl-tRNA synthetase family. MetG type 1 subfamily. In terms of assembly, homodimer. It depends on Zn(2+) as a cofactor.

The protein resides in the cytoplasm. The enzyme catalyses tRNA(Met) + L-methionine + ATP = L-methionyl-tRNA(Met) + AMP + diphosphate. In terms of biological role, is required not only for elongation of protein synthesis but also for the initiation of all mRNA translation through initiator tRNA(fMet) aminoacylation. In Erwinia tasmaniensis (strain DSM 17950 / CFBP 7177 / CIP 109463 / NCPPB 4357 / Et1/99), this protein is Methionine--tRNA ligase.